We begin with the raw amino-acid sequence, 369 residues long: Ferredoxin--NADP reductase 2 (369 aa).

Positions M1–G23 are disordered. 7 residues coordinate FAD: D58, Q66, Y71, V111, F146, D311, and T352.

This sequence belongs to the ferredoxin--NADP reductase type 2 family. Homodimer. It depends on FAD as a cofactor.

It carries out the reaction 2 reduced [2Fe-2S]-[ferredoxin] + NADP(+) + H(+) = 2 oxidized [2Fe-2S]-[ferredoxin] + NADPH. The protein is Ferredoxin--NADP reductase 2 of Cupriavidus necator (strain ATCC 17699 / DSM 428 / KCTC 22496 / NCIMB 10442 / H16 / Stanier 337) (Ralstonia eutropha).